Reading from the N-terminus, the 200-residue chain is Large ribosomal subunit protein uL4 (200 aa).

The interval 42–69 (SKAQKNRSDVSGGGRKPWRQKGTGRARA) is disordered.

This sequence belongs to the universal ribosomal protein uL4 family. As to quaternary structure, part of the 50S ribosomal subunit.

One of the primary rRNA binding proteins, this protein initially binds near the 5'-end of the 23S rRNA. It is important during the early stages of 50S assembly. It makes multiple contacts with different domains of the 23S rRNA in the assembled 50S subunit and ribosome. In terms of biological role, forms part of the polypeptide exit tunnel. This chain is Large ribosomal subunit protein uL4, found in Alcanivorax borkumensis (strain ATCC 700651 / DSM 11573 / NCIMB 13689 / SK2).